Here is a 262-residue protein sequence, read N- to C-terminus: Putative non-heme bromoperoxidase BpoC (262 aa).

Residues arginine 21, 87–88, and arginine 120 each bind substrate; that span reads SM. Serine 87 is a catalytic residue. Residues aspartate 211 and histidine 239 contribute to the active site. Substrate is bound at residue histidine 239.

It belongs to the AB hydrolase superfamily. As to quaternary structure, homodimer.

This Mycobacterium tuberculosis (strain CDC 1551 / Oshkosh) protein is Putative non-heme bromoperoxidase BpoC (bpoC).